The primary structure comprises 285 residues: Cell division protein ZipA (285 aa).

Residue M1 is a topological domain, periplasmic. The helical transmembrane segment at 2–22 (EIGLREWLIVIGIVVIGGILF) threads the bilayer. Residues 23 to 285 (DGWRRMRGSK…FERRQLTHKR (263 aa)) lie on the Cytoplasmic side of the membrane. The interval 49 to 88 (AVSENSELLGPSRSVDFPQGAGFEPDEENLPSLSVRGPSR) is disordered.

This sequence belongs to the ZipA family. Interacts with FtsZ via their C-terminal domains.

It localises to the cell inner membrane. Its function is as follows. Essential cell division protein that stabilizes the FtsZ protofilaments by cross-linking them and that serves as a cytoplasmic membrane anchor for the Z ring. Also required for the recruitment to the septal ring of downstream cell division proteins. The polypeptide is Cell division protein ZipA (Azotobacter vinelandii (strain DJ / ATCC BAA-1303)).